A 526-amino-acid polypeptide reads, in one-letter code: Serine/threonine-protein kinase ppk22 (526 aa).

2 disordered regions span residues 1-24 and 39-106; these read MARETEFNDKSPSSTDDGMSQSHF and AATV…PRPL. Polar residues predominate over residues 10–23; it reads KSPSSTDDGMSQSH. Over residues 65 to 78 the composition is skewed to low complexity; it reads NQLNELDLNDSSDQ. Position 154 is a phosphoserine (Ser154). The Protein kinase domain occupies 155–445; the sequence is FEKIRLLGQG…ASDIKQHPFF (291 aa). Residues 161 to 169 and Lys184 contribute to the ATP site; that span reads LGQGDVGKV. The Proton acceptor role is filled by Asp280. Position 339 is a phosphothreonine (Thr339). Ser341 is subject to Phosphoserine. Residue Tyr348 is modified to Phosphotyrosine. An AGC-kinase C-terminal domain is found at 446-526; the sequence is RHIQWALLRS…SVTLHHAGDE (81 aa). Positions 499–526 are disordered; sequence MHSSTPVNEQSNPFDSFSSVTLHHAGDE. The segment covering 500–519 has biased composition (polar residues); that stretch reads HSSTPVNEQSNPFDSFSSVT.

This sequence belongs to the protein kinase superfamily. AGC Ser/Thr protein kinase family.

It is found in the cytoplasm. The enzyme catalyses L-seryl-[protein] + ATP = O-phospho-L-seryl-[protein] + ADP + H(+). It carries out the reaction L-threonyl-[protein] + ATP = O-phospho-L-threonyl-[protein] + ADP + H(+). In Schizosaccharomyces pombe (strain 972 / ATCC 24843) (Fission yeast), this protein is Serine/threonine-protein kinase ppk22 (ppk22).